Here is a 1241-residue protein sequence, read N- to C-terminus: Phosphorylase b kinase regulatory subunit alpha, skeletal muscle isoform (1241 aa).

Phosphoserine is present on residues S629, S730, S736, S739, S759, S812, S973, S982, and S986. Positions 811–841 (LSELYVKVGEIRHWGLIRYISGILRKKVEAL) are calmodulin-binding. Residue S1008 is modified to Phosphoserine; by autocatalysis. Position 1019 is a phosphoserine; by PKA (S1019). Phosphoserine occurs at positions 1021 and 1024. The tract at residues 1064 to 1104 (SKDSRQGQWQRRRRLDGALNRVPIGFYQKVWKILQKCHGLS) is calmodulin-binding. Residue S1131 is modified to Phosphoserine. The S-farnesyl cysteine moiety is linked to residue C1238.

It belongs to the phosphorylase b kinase regulatory chain family. As to quaternary structure, hexadecamer of 4 heterotetramers, each composed of alpha, beta, gamma, and delta subunits. Alpha (PHKA1 or PHKA2) and beta (PHKB) are regulatory subunits, gamma (PHKG1 or PHKG2) is the catalytic subunit, and delta is calmodulin. In terms of processing, although the final Cys may be farnesylated, the terminal tripeptide is probably not removed, and the C-terminus is not methylated. As to expression, both isoforms are expressed in muscle.

It is found in the cell membrane. It participates in glycan biosynthesis; glycogen metabolism. By phosphorylation of various serine residues and by calcium. Its function is as follows. Phosphorylase b kinase catalyzes the phosphorylation of serine in certain substrates, including troponin I. The alpha chain may bind calmodulin. The protein is Phosphorylase b kinase regulatory subunit alpha, skeletal muscle isoform (Phka1) of Mus musculus (Mouse).